The following is a 393-amino-acid chain: Proteasome-activating nucleotidase (393 aa).

Positions 14 to 53 (SDEVQLVRLLEEKIKSLQIEIENLRKELNYYKAEMEKMLS) form a coiled coil. ATP contacts are provided by residues 178-183 (GTGKTM) and Tyr317. The segment at 391–393 (KYS) is docks into pockets in the proteasome alpha-ring to cause gate opening.

It belongs to the AAA ATPase family. In terms of assembly, homohexamer. The hexameric complex has a two-ring architecture resembling a top hat that caps the 20S proteasome core at one or both ends. Upon ATP-binding, the C-terminus of PAN interacts with the alpha-rings of the proteasome core by binding to the intersubunit pockets.

It is found in the cytoplasm. ATPase which is responsible for recognizing, binding, unfolding and translocation of substrate proteins into the archaeal 20S proteasome core particle. Is essential for opening the gate of the 20S proteasome via an interaction with its C-terminus, thereby allowing substrate entry and access to the site of proteolysis. Thus, the C-termini of the proteasomal ATPase function like a 'key in a lock' to induce gate opening and therefore regulate proteolysis. Unfolding activity requires energy from ATP hydrolysis, whereas ATP binding alone promotes ATPase-20S proteasome association which triggers gate opening, and supports translocation of unfolded substrates. The polypeptide is Proteasome-activating nucleotidase (Saccharolobus islandicus (strain M.16.27) (Sulfolobus islandicus)).